A 766-amino-acid polypeptide reads, in one-letter code: Serine/threonine-protein kinase tousled-like 1 (766 aa).

The interval M1–D198 is disordered. Low complexity predominate over residues S20–S33. T38 carries the post-translational modification Phosphothreonine. The span at R43–E64 shows a compositional bias: basic and acidic residues. 3 positions are modified to phosphoserine: S54, S77, and S80. Residues T68–A85 show a composition bias toward low complexity. Residues A87–S103 show a composition bias toward polar residues. Basic and acidic residues predominate over residues S105–R121. Phosphoserine is present on residues S134, S159, S174, and S176. The span at S170–T192 shows a compositional bias: low complexity. Residues N229–E280 are a coiled coil. Positions K344–P381 are disordered. The segment covering T353–E365 has biased composition (polar residues). Residues H397–Q445 adopt a coiled-coil conformation. The Protein kinase domain occupies Y456–L734. Residues L462–V470 and K485 contribute to the ATP site. The Proton acceptor role is filled by D586. S743 is modified (phosphoserine). Positions G745–Y766 are disordered.

The protein belongs to the protein kinase superfamily. Ser/Thr protein kinase family. Heterodimer with TLK2. Mg(2+) is required as a cofactor. Ubiquitously expressed in all tissues examined.

It is found in the nucleus. The catalysed reaction is L-seryl-[protein] + ATP = O-phospho-L-seryl-[protein] + ADP + H(+). It catalyses the reaction L-threonyl-[protein] + ATP = O-phospho-L-threonyl-[protein] + ADP + H(+). Cell-cycle regulated, maximal activity in S-phase. Inactivated by phosphorylation at Ser-743, potentially by CHEK1. Functionally, rapidly and transiently inhibited by phosphorylation following the generation of DNA double-stranded breaks during S-phase. This is cell cycle checkpoint and ATM-pathway dependent and appears to regulate processes involved in chromatin assembly. Isoform 3 protects the cells from the ionizing radiation by facilitating the repair of DSBs. In vitro, phosphorylates histone H3 at 'Ser-10'. The chain is Serine/threonine-protein kinase tousled-like 1 (Tlk1) from Mus musculus (Mouse).